The sequence spans 288 residues: Homoserine kinase (288 aa).

79–89 lines the ATP pocket; that stretch reads PLARGLGSSSS.

The protein belongs to the GHMP kinase family. Homoserine kinase subfamily.

The protein localises to the cytoplasm. It carries out the reaction L-homoserine + ATP = O-phospho-L-homoserine + ADP + H(+). It participates in amino-acid biosynthesis; L-threonine biosynthesis; L-threonine from L-aspartate: step 4/5. Catalyzes the ATP-dependent phosphorylation of L-homoserine to L-homoserine phosphate. In Streptococcus gordonii (strain Challis / ATCC 35105 / BCRC 15272 / CH1 / DL1 / V288), this protein is Homoserine kinase.